The following is a 465-amino-acid chain: Argininosuccinate lyase (465 aa).

The protein belongs to the lyase 1 family. Argininosuccinate lyase subfamily.

It localises to the cytoplasm. The catalysed reaction is 2-(N(omega)-L-arginino)succinate = fumarate + L-arginine. The protein operates within amino-acid biosynthesis; L-arginine biosynthesis; L-arginine from L-ornithine and carbamoyl phosphate: step 3/3. The polypeptide is Argininosuccinate lyase (Variovorax paradoxus (strain S110)).